The sequence spans 181 residues: Translationally-controlled tumor protein homolog (181 aa).

In terms of domain architecture, TCTP spans 1-181 (MLIFKDAFTD…VKEALVEEKQ (181 aa)).

Belongs to the TCTP family.

It localises to the cytoplasm. Its function is as follows. Involved in calcium binding and microtubule stabilization. The sequence is that of Translationally-controlled tumor protein homolog from Wuchereria bancrofti.